A 116-amino-acid polypeptide reads, in one-letter code: MRCLSKKHQKQGDEHGGEIPLPNPDEGTIICGVVRHLGGDYLIAKCLDGVDRKIRIPGKLRRKVWITEGDIILVGLWDFSSEKGEVVYKYGKNEVNKLVEKGVVPKEFIDALSELI.

The segment at 1–25 is disordered; it reads MRCLSKKHQKQGDEHGGEIPLPNPD. Residues 17-91 form the S1-like domain; the sequence is GEIPLPNPDE…EKGEVVYKYG (75 aa).

It belongs to the eIF-1A family.

In terms of biological role, seems to be required for maximal rate of protein biosynthesis. Enhances ribosome dissociation into subunits and stabilizes the binding of the initiator Met-tRNA(I) to 40 S ribosomal subunits. This is Translation initiation factor 1A (eIF1A) from Desulfurococcus amylolyticus (strain DSM 18924 / JCM 16383 / VKM B-2413 / 1221n) (Desulfurococcus kamchatkensis).